The following is a 252-amino-acid chain: Aspartate/glutamate leucyltransferase (252 aa).

The protein belongs to the R-transferase family. Bpt subfamily.

It is found in the cytoplasm. It carries out the reaction N-terminal L-glutamyl-[protein] + L-leucyl-tRNA(Leu) = N-terminal L-leucyl-L-glutamyl-[protein] + tRNA(Leu) + H(+). The catalysed reaction is N-terminal L-aspartyl-[protein] + L-leucyl-tRNA(Leu) = N-terminal L-leucyl-L-aspartyl-[protein] + tRNA(Leu) + H(+). Its function is as follows. Functions in the N-end rule pathway of protein degradation where it conjugates Leu from its aminoacyl-tRNA to the N-termini of proteins containing an N-terminal aspartate or glutamate. The sequence is that of Aspartate/glutamate leucyltransferase from Afipia carboxidovorans (strain ATCC 49405 / DSM 1227 / KCTC 32145 / OM5) (Oligotropha carboxidovorans).